The following is a 915-amino-acid chain: p53-induced death domain-containing protein 1 (915 aa).

Ala2 is subject to N-acetylalanine. 7 LRR repeats span residues 131–152 (CLAHLDLSFNRLETLPTCVPEL), 154–176 (GLDALLLSHNHLSELPEALGALP), 177–199 (ALTFLTVTHNRLERLPLTLGSLS), 200–221 (TLQRLDLSENLLDTIPSEIGNL), 223–245 (SLSELNLASNRLQSLPASLAGLR), 246–268 (SLRLLVLHSNLLTSVPTGLVHLP), and 269–290 (LITRLDLRDNRLRDLPAELLDA). Ser304 bears the Phosphoserine mark. ZU5 domains are found at residues 327-459 (DLDS…VLRP) and 460-601 (VSNT…WYTT). 2 peptidase S68 regions span residues 428–457 (DLETQLEEEAPKRLWARCQVPHFSWFLVVL) and 571–599 (DITTQVALEFTHLYARFQVTHFSWYWLWY). Catalysis depends on residues His449, Ser451, His591, and Ser593. A UPA domain region spans residues 585 to 721 (ARFQVTHFSW…TTALDREAQD (137 aa)). Positions 793–878 (TQSNLLSVAS…DVAEEVRAIL (86 aa)) constitute a Death domain. The segment at 888 to 915 (SIRRTGLAPEDSTLPGTSASQTPESAQA) is disordered. A compositionally biased stretch (polar residues) spans 901 to 915 (LPGTSASQTPESAQA).

As to quaternary structure, forms a complex named the PIDDosome with CASP2 and CRADD. Forms a complex with IKBKG and RIPK1. Interacts with FADD and MADD. In terms of processing, undergoes autoproteolytic processing whose extent either directs cells towards survival or apoptotic pathways. Autoproteolytically cleaved into two main fragments PIDD-N and PIDD-C. PIDD-C can be further processed into PIDD-CC, a processing which is enhanced by DNA damage. The cleavage producing PIDD-C is required for translocation of PIDD1 to the nucleus upon DNA damage and activation of NF-kappa-B. PIDD-CC mediates the interaction with CRADD and the cleavage producing PIDD-CC is required for the activation of CASP2. PIDD-N remains associated with PIDD-C and PIDD-CC after cleavage. As to expression, ubiquitous.

Its subcellular location is the cytoplasm. The protein resides in the nucleus. In terms of biological role, component of the DNA damage/stress response pathway that functions downstream of p53/TP53 and can either promote cell survival or apoptosis. Associated with CRADD and the CASP2 caspase, it forms the PIDDosome a complex that activates CASP2 and triggers apoptosis. Associated with IKBKG and RIPK1, it enhances sumoylation and ubiquitination of IKBKG which is important for activation of the transcription factor NF-kappa-B. The polypeptide is p53-induced death domain-containing protein 1 (Mus musculus (Mouse)).